Here is a 571-residue protein sequence, read N- to C-terminus: Coiled-coil domain-containing protein 22 homolog (571 aa).

Coiled coils occupy residues 406-434 (MMDL…SRTA) and 509-571 (CAEL…AHLR).

The protein belongs to the CCDC22 family.

The sequence is that of Coiled-coil domain-containing protein 22 homolog from Culex quinquefasciatus (Southern house mosquito).